A 293-amino-acid polypeptide reads, in one-letter code: Ribosomal protein L11 methyltransferase (293 aa).

Positions 145, 166, 188, and 230 each coordinate S-adenosyl-L-methionine.

It belongs to the methyltransferase superfamily. PrmA family.

The protein localises to the cytoplasm. The catalysed reaction is L-lysyl-[protein] + 3 S-adenosyl-L-methionine = N(6),N(6),N(6)-trimethyl-L-lysyl-[protein] + 3 S-adenosyl-L-homocysteine + 3 H(+). In terms of biological role, methylates ribosomal protein L11. This chain is Ribosomal protein L11 methyltransferase, found in Enterobacter sp. (strain 638).